Here is an 866-residue protein sequence, read N- to C-terminus: DNA topoisomerase 3-beta (866 aa).

The region spanning 4–149 (TVLMVAEKPS…RIFRAKFSSV (146 aa)) is the Toprim domain. Residues E10, D114, and D116 each contribute to the Mg(2+) site. The region spanning 165 to 585 (SKDEALAVDA…HVLQQFMKKY (421 aa)) is the Topo IA-type catalytic domain. The tract at residues 207 to 212 (SYGPCQ) is interaction with DNA. Catalysis depends on Y329, which acts as the O-(5'-phospho-DNA)-tyrosine intermediate. The segment covering 830 to 853 (MRRGRGRGRGRGRGRGSSRGRRGS) has biased composition (basic residues). The interval 830 to 866 (MRRGRGRGRGRGRGRGSSRGRRGSSRHDDPKMSFRDF) is disordered. Over residues 854-866 (SRHDDPKMSFRDF) the composition is skewed to basic and acidic residues.

This sequence belongs to the type IA topoisomerase family. Requires Mg(2+) as cofactor.

It carries out the reaction ATP-independent breakage of single-stranded DNA, followed by passage and rejoining.. Releases the supercoiling and torsional tension of DNA introduced during the DNA replication and transcription by transiently cleaving and rejoining one strand of the DNA duplex. Introduces a single-strand break via transesterification at a target site in duplex DNA. The scissile phosphodiester is attacked by the catalytic tyrosine of the enzyme, resulting in the formation of a DNA-(5'-phosphotyrosyl)-enzyme intermediate and the expulsion of a 3'-OH DNA strand. The free DNA strand than undergoes passage around the unbroken strand thus removing DNA supercoils. Finally, in the religation step, the DNA 3'-OH attacks the covalent intermediate to expel the active-site tyrosine and restore the DNA phosphodiester backbone. This chain is DNA topoisomerase 3-beta (TOP3B), found in Oryza sativa subsp. japonica (Rice).